The chain runs to 224 residues: Urease accessory protein UreF (224 aa).

This sequence belongs to the UreF family. As to quaternary structure, ureD, UreF and UreG form a complex that acts as a GTP-hydrolysis-dependent molecular chaperone, activating the urease apoprotein by helping to assemble the nickel containing metallocenter of UreC. The UreE protein probably delivers the nickel.

Its subcellular location is the cytoplasm. Required for maturation of urease via the functional incorporation of the urease nickel metallocenter. The protein is Urease accessory protein UreF of Pseudomonas fluorescens (strain ATCC BAA-477 / NRRL B-23932 / Pf-5).